The primary structure comprises 179 residues: Protein GrpE (179 aa).

Residues 1–22 are disordered; the sequence is MTDNNIENNEEEIRKAPSANDR. The span at 11–22 shows a compositional bias: basic and acidic residues; it reads EEIRKAPSANDR.

Belongs to the GrpE family. Homodimer.

The protein localises to the cytoplasm. Participates actively in the response to hyperosmotic and heat shock by preventing the aggregation of stress-denatured proteins, in association with DnaK and GrpE. It is the nucleotide exchange factor for DnaK and may function as a thermosensor. Unfolded proteins bind initially to DnaJ; upon interaction with the DnaJ-bound protein, DnaK hydrolyzes its bound ATP, resulting in the formation of a stable complex. GrpE releases ADP from DnaK; ATP binding to DnaK triggers the release of the substrate protein, thus completing the reaction cycle. Several rounds of ATP-dependent interactions between DnaJ, DnaK and GrpE are required for fully efficient folding. The chain is Protein GrpE from Rickettsia canadensis (strain McKiel).